We begin with the raw amino-acid sequence, 127 residues long: Protein KRTCAP2 homolog (127 aa).

Helical transmembrane passes span 13–33 (LISL…SNFF), 41–61 (ILGG…IGAI), 65–85 (VKLL…SSVH), and 87–107 (VSGT…NHAS).

Belongs to the KRTCAP2 family. Component of the oligosaccharyltransferase (OST) complex.

It localises to the membrane. In terms of biological role, subunit of the oligosaccharyl transferase (OST) complex that catalyzes the initial transfer of a defined glycan (Glc(3)Man(9)GlcNAc(2) in eukaryotes) from the lipid carrier dolichol-pyrophosphate to an asparagine residue within an Asn-X-Ser/Thr consensus motif in nascent polypeptide chains, the first step in protein N-glycosylation. N-glycosylation occurs cotranslationally and the complex associates with the Sec61 complex at the channel-forming translocon complex that mediates protein translocation across the endoplasmic reticulum (ER). All subunits are required for a maximal enzyme activity. This is Protein KRTCAP2 homolog from Dictyostelium discoideum (Social amoeba).